An 894-amino-acid polypeptide reads, in one-letter code: UPF0182 protein GSU2333 (894 aa).

A run of 7 helical transmembrane segments spans residues 6 to 26 (FLLIIAAVFVVLPAALSLITF), 50 to 70 (VGAGLASGLFMFAFAMVNLYF), 98 to 118 (MVQMVKPLSILAALVLSLLAG), 162 to 182 (KGFVAFTVLVTGIMVGAVYFF), 203 to 223 (LAILLGIFSLTLATGFYLDAV), 250 to 270 (ILTLATPLAGAVVAFGLWKGA), and 275 to 295 (LIPPIIVAAVYGIGIVGYPAM).

The protein belongs to the UPF0182 family.

Its subcellular location is the cell membrane. This chain is UPF0182 protein GSU2333, found in Geobacter sulfurreducens (strain ATCC 51573 / DSM 12127 / PCA).